Here is a 143-residue protein sequence, read N- to C-terminus: MSLSSKDKATVKLFWGRMSGKAELIGADALSRMLAVYPQTKIYFSHWKSLSPGSSEVKKHGKTIMMGIGDAVTKMEDLERGLLTLSELHAFKLRVDPTNFKLLSLNILVVMAIMFPEDFTPMAHLAVDKFLCALALALSEKYR.

The residue at position 2 (Ser-2) is an N-acetylserine. The Globin domain maps to 2–143 (SLSSKDKATV…LALALSEKYR (142 aa)). His-60 is a binding site for O2. His-89 contributes to the heme b binding site.

This sequence belongs to the globin family. Hb 2 is a heterotetramer of two alpha-2 and two beta-1 chains. Hb 3 is a heterotetramer of two alpha-2 and two beta-2 chains. As to expression, red blood cells.

Its function is as follows. Involved in oxygen transport from gills to the various peripheral tissues. This chain is Hemoglobin subunit alpha-2 (hba2), found in Arctogadus glacialis (Arctic cod).